We begin with the raw amino-acid sequence, 425 residues long: Enolase (425 aa).

Q162 lines the (2R)-2-phosphoglycerate pocket. E204 functions as the Proton donor in the catalytic mechanism. The Mg(2+) site is built by D241, E282, and D309. 4 residues coordinate (2R)-2-phosphoglycerate: K334, R363, S364, and K385. The active-site Proton acceptor is the K334.

This sequence belongs to the enolase family. Requires Mg(2+) as cofactor.

The protein localises to the cytoplasm. It is found in the secreted. It localises to the cell surface. The catalysed reaction is (2R)-2-phosphoglycerate = phosphoenolpyruvate + H2O. It functions in the pathway carbohydrate degradation; glycolysis; pyruvate from D-glyceraldehyde 3-phosphate: step 4/5. Its function is as follows. Catalyzes the reversible conversion of 2-phosphoglycerate (2-PG) into phosphoenolpyruvate (PEP). It is essential for the degradation of carbohydrates via glycolysis. This chain is Enolase, found in Corynebacterium efficiens (strain DSM 44549 / YS-314 / AJ 12310 / JCM 11189 / NBRC 100395).